Here is a 98-residue protein sequence, read N- to C-terminus: uncharacterized protein (98 aa).

2 helical membrane passes run 8-28 (LILK…HYFL) and 73-93 (LWFI…SISL).

It is found in the membrane. This is an uncharacterized protein from Saccharomyces cerevisiae (strain ATCC 204508 / S288c) (Baker's yeast).